The chain runs to 138 residues: Nucleoside diphosphate kinase (138 aa).

Positions 11, 59, 87, 93, 104, and 114 each coordinate ATP. Histidine 117 serves as the catalytic Pros-phosphohistidine intermediate.

This sequence belongs to the NDK family. The cofactor is Mg(2+).

It localises to the cytoplasm. It carries out the reaction a 2'-deoxyribonucleoside 5'-diphosphate + ATP = a 2'-deoxyribonucleoside 5'-triphosphate + ADP. The catalysed reaction is a ribonucleoside 5'-diphosphate + ATP = a ribonucleoside 5'-triphosphate + ADP. Functionally, major role in the synthesis of nucleoside triphosphates other than ATP. The ATP gamma phosphate is transferred to the NDP beta phosphate via a ping-pong mechanism, using a phosphorylated active-site intermediate. This Saccharolobus islandicus (strain Y.N.15.51 / Yellowstone #2) (Sulfolobus islandicus) protein is Nucleoside diphosphate kinase.